A 488-amino-acid chain; its full sequence is Pup--protein ligase (488 aa).

Glutamate 33 serves as a coordination point for Mg(2+). Arginine 76 is an ATP binding site. Residue tyrosine 78 coordinates Mg(2+). Catalysis depends on aspartate 80, which acts as the Proton acceptor. Glutamate 86 contacts Mg(2+). Residues threonine 89 and tryptophan 453 each coordinate ATP.

Belongs to the Pup ligase/Pup deamidase family. Pup-conjugating enzyme subfamily.

It carries out the reaction ATP + [prokaryotic ubiquitin-like protein]-L-glutamate + [protein]-L-lysine = ADP + phosphate + N(6)-([prokaryotic ubiquitin-like protein]-gamma-L-glutamyl)-[protein]-L-lysine.. The protein operates within protein degradation; proteasomal Pup-dependent pathway. Its pathway is protein modification; protein pupylation. In terms of biological role, catalyzes the covalent attachment of the prokaryotic ubiquitin-like protein modifier Pup to the proteasomal substrate proteins, thereby targeting them for proteasomal degradation. This tagging system is termed pupylation. The ligation reaction involves the side-chain carboxylate of the C-terminal glutamate of Pup and the side-chain amino group of a substrate lysine. This Bifidobacterium adolescentis (strain ATCC 15703 / DSM 20083 / NCTC 11814 / E194a) protein is Pup--protein ligase.